Here is a 551-residue protein sequence, read N- to C-terminus: Trigger factor (551 aa).

A PPIase FKBP-type domain is found at Gly-165–Thr-250. The disordered stretch occupies residues Ala-442–Glu-551. Residues Gly-458–Ala-472 are compositionally biased toward basic and acidic residues. Positions Glu-513–Lys-541 are enriched in low complexity. Basic residues predominate over residues Ala-542 to Glu-551.

The protein belongs to the FKBP-type PPIase family. Tig subfamily.

It localises to the cytoplasm. The enzyme catalyses [protein]-peptidylproline (omega=180) = [protein]-peptidylproline (omega=0). Its function is as follows. Involved in protein export. Acts as a chaperone by maintaining the newly synthesized protein in an open conformation. Functions as a peptidyl-prolyl cis-trans isomerase. The sequence is that of Trigger factor from Rhizorhabdus wittichii (strain DSM 6014 / CCUG 31198 / JCM 15750 / NBRC 105917 / EY 4224 / RW1) (Sphingomonas wittichii).